We begin with the raw amino-acid sequence, 61 residues long: MAKCAICEKGPHFGNAVSHSHRRSNKVWNANVKSVKVKVNGNAKKMYVCTSCLRSGLVERA.

Belongs to the bacterial ribosomal protein bL28 family.

The sequence is that of Large ribosomal subunit protein bL28 from Lachnospira eligens (strain ATCC 27750 / DSM 3376 / VPI C15-48 / C15-B4) (Eubacterium eligens).